Consider the following 523-residue polypeptide: Calcium and calcium/calmodulin-dependent serine/threonine-protein kinase DMI-3 (523 aa).

The Protein kinase domain occupies 12–306 (YEVSEILGRG…ALELLSDPWV (295 aa)). Residues 18 to 26 (LGRGGFSVV) and Lys-47 contribute to the ATP site. Asp-171 acts as the Proton acceptor in catalysis. Position 271 is a phosphothreonine (Thr-271). The interval 329–342 (ARRKLRAAAIASVW) is calmodulin-binding. 3 consecutive EF-hand domains span residues 400–435 (SLIP…LKNS), 436–471 (KGED…LPYD), and 478–513 (TEPG…DSSL). The Ca(2+) site is built by Asp-413, Asn-415, Asp-417, Thr-419, Glu-424, Asp-449, Asp-451, Ser-453, Cys-455, Glu-460, Asp-491, Asn-493, Asp-495, Lys-497, and Glu-502.

This sequence belongs to the protein kinase superfamily. CAMK Ser/Thr protein kinase family. CaMK subfamily. Interacts with IPD3. In terms of processing, autophosphorylation. As to expression, highly expressed in roots. Expressed in root hairs and nodules. Expressed at low levels in flowers. Not detected in leaves or stems.

The protein localises to the nucleus. It carries out the reaction L-seryl-[protein] + ATP = O-phospho-L-seryl-[protein] + ADP + H(+). It catalyses the reaction L-threonyl-[protein] + ATP = O-phospho-L-threonyl-[protein] + ADP + H(+). Activated by calcium. Autophosphorylation may play an important role in the regulation of the kinase activity. Functionally, during nodulation, plays a central role in bacterial infection and contributes to nodule organogenesis. Protein kinase that recognizes the calcium spiking induced by Nod factors and translates this signal to components controlling nodulation and mycorrhizal infection responses. May phosphorylate the NSP1 protein. Required in epidermal and cortical cells to promote infection thread (IT) formation in root hairs. This chain is Calcium and calcium/calmodulin-dependent serine/threonine-protein kinase DMI-3, found in Medicago truncatula (Barrel medic).